Here is a 54-residue protein sequence, read N- to C-terminus: Lectin alpha-1 chain (54 aa).

It belongs to the leguminous lectin family. In terms of assembly, tetramer of two alpha and two beta chains.

In Lathyrus hirsutus (Rough pea), this protein is Lectin alpha-1 chain.